The primary structure comprises 393 residues: Homeobox protein knotted-1-like 4 (393 aa).

Polar residues predominate over residues 1-13 (MAFHNNHFNHFTD). Disordered regions lie at residues 1 to 39 (MAFHNNHFNHFTDQQQHQPPPPPQQQQQQHFQESAPPNW) and 81 to 114 (QRGNTANNNNNETSGDVIEDVPGGEESMIGEKKE). Residues 286–306 (ELKHELKQGYKEKIVDIREEI) form the ELK domain. Residues 307-370 (LRKRRAGKLP…NQRKRNWHSN (64 aa)) constitute a DNA-binding region (homeobox; TALE-type). The interval 363–393 (RKRNWHSNPSSSTVSKNKRRSNAGENSGRDR) is disordered. Residues 368–377 (HSNPSSSTVS) show a composition bias toward polar residues.

Belongs to the TALE/KNOX homeobox family. As to quaternary structure, may form heterodimeric complex with the TALE/BELL proteins. Interacts with OFP1, OFP2, OFP4 and OFP12. Interacts with KNATM-B.

Its subcellular location is the nucleus. This Arabidopsis thaliana (Mouse-ear cress) protein is Homeobox protein knotted-1-like 4 (KNAT4).